The primary structure comprises 318 residues: Transaldolase (318 aa).

The active-site Schiff-base intermediate with substrate is Lys-126.

It belongs to the transaldolase family. Type 1 subfamily. In terms of assembly, homodimer.

It localises to the cytoplasm. It carries out the reaction D-sedoheptulose 7-phosphate + D-glyceraldehyde 3-phosphate = D-erythrose 4-phosphate + beta-D-fructose 6-phosphate. It participates in carbohydrate degradation; pentose phosphate pathway; D-glyceraldehyde 3-phosphate and beta-D-fructose 6-phosphate from D-ribose 5-phosphate and D-xylulose 5-phosphate (non-oxidative stage): step 2/3. Its function is as follows. Transaldolase is important for the balance of metabolites in the pentose-phosphate pathway. This chain is Transaldolase, found in Cupriavidus necator (strain ATCC 17699 / DSM 428 / KCTC 22496 / NCIMB 10442 / H16 / Stanier 337) (Ralstonia eutropha).